We begin with the raw amino-acid sequence, 882 residues long: Lon protease homolog, mitochondrial (882 aa).

The N-terminal 34 residues, Met-1–Tyr-34, are a transit peptide targeting the mitochondrion. The 214-residue stretch at Thr-68 to Arg-281 folds into the Lon N-terminal domain. Residue Gly-435–Thr-442 participates in ATP binding. Residues Pro-687–Ser-878 enclose the Lon proteolytic domain. Active-site residues include Ser-784 and Lys-827.

It belongs to the peptidase S16 family. In terms of assembly, homohexamer or homoheptamer. Organized in a ring with a central cavity.

The protein localises to the mitochondrion matrix. The enzyme catalyses Hydrolysis of proteins in presence of ATP.. ATP-dependent serine protease that mediates the selective degradation of misfolded, unassembled or oxidatively damaged polypeptides as well as certain short-lived regulatory proteins in the mitochondrial matrix. May also have a chaperone function in the assembly of inner membrane protein complexes. Participates in the regulation of mitochondrial gene expression and in the maintenance of the integrity of the mitochondrial genome. Binds to mitochondrial DNA in a site-specific manner. The sequence is that of Lon protease homolog, mitochondrial from Phaeodactylum tricornutum (strain CCAP 1055/1).